Here is a 362-residue protein sequence, read N- to C-terminus: Class I histocompatibility antigen, Gogo-B*0102 alpha chain (362 aa).

The first 24 residues, 1–24, serve as a signal peptide directing secretion; it reads MRVTAPRTLLLLLSAALALTETWA. The alpha-1 stretch occupies residues 25–114; that stretch reads GSHSMRYFDT…ALRYYNQSEA (90 aa). Residues 25–308 lie on the Extracellular side of the membrane; it reads GSHSMRYFDT…EPSSQSTIPI (284 aa). N-linked (GlcNAc...) asparagine glycosylation is present at Asn110. An alpha-2 region spans residues 115 to 206; the sequence is GSHTFQRMFG…ENGRETLQRA (92 aa). Cystine bridges form between Cys125–Cys188 and Cys227–Cys283. An alpha-3 region spans residues 207 to 298; that stretch reads DTPKTHVTHH…GLPKPLTLRW (92 aa). The region spanning 209 to 295 is the Ig-like C1-type domain; sequence PKTHVTHHPI…QHEGLPKPLT (87 aa). The interval 299 to 308 is connecting peptide; that stretch reads EPSSQSTIPI. Residues 309–332 traverse the membrane as a helical segment; that stretch reads VGIVAGLAVLAVVVIGAVVTAVIC. The Cytoplasmic portion of the chain corresponds to 333–362; that stretch reads RRKSSGGKGGSYSQAASSDSAQGSDVSLTA. The segment at 335–362 is disordered; it reads KSSGGKGGSYSQAASSDSAQGSDVSLTA. The span at 343-362 shows a compositional bias: low complexity; it reads SYSQAASSDSAQGSDVSLTA.

This sequence belongs to the MHC class I family. Heterodimer of an alpha chain and a beta chain (beta-2-microglobulin).

It localises to the membrane. Its function is as follows. Involved in the presentation of foreign antigens to the immune system. The sequence is that of Class I histocompatibility antigen, Gogo-B*0102 alpha chain from Gorilla gorilla gorilla (Western lowland gorilla).